The following is a 342-amino-acid chain: L-threonine 3-dehydrogenase (342 aa).

Cysteine 38 is a Zn(2+) binding site. Residues threonine 40 and histidine 43 each act as charge relay system in the active site. Zn(2+) contacts are provided by histidine 63, glutamate 64, cysteine 93, cysteine 96, cysteine 99, and cysteine 107. Residues isoleucine 175, aspartate 195, arginine 200, 262-264, and 286-287 contribute to the NAD(+) site; these read LGI and IY.

It belongs to the zinc-containing alcohol dehydrogenase family. Homotetramer. Zn(2+) is required as a cofactor.

Its subcellular location is the cytoplasm. It carries out the reaction L-threonine + NAD(+) = (2S)-2-amino-3-oxobutanoate + NADH + H(+). It functions in the pathway amino-acid degradation; L-threonine degradation via oxydo-reductase pathway; glycine from L-threonine: step 1/2. Its function is as follows. Catalyzes the NAD(+)-dependent oxidation of L-threonine to 2-amino-3-ketobutyrate. The chain is L-threonine 3-dehydrogenase from Burkholderia ambifaria (strain MC40-6).